The sequence spans 433 residues: Probable beta-1,3-galactosyl-O-glycosyl-glycoprotein beta-1,6-N-acetylglucosaminyltransferase 7 (433 aa).

Residues 1 to 8 (MSQLRTTK) are Cytoplasmic-facing. Residues 9–25 (AGLVACGMICAFIFLYL) form a helical; Signal-anchor for type II membrane protein membrane-spanning segment. Residues 26 to 433 (RNPGPEEAEA…QSHFNSQPHH (408 aa)) are Extracellular-facing. 4 cysteine pairs are disulfide-bonded: C57-C209, C143-C358, C164-C191, and C367-C398. A glycan (N-linked (GlcNAc...) asparagine) is linked at N112. The disordered stretch occupies residues 233–275 (NITPGVTPPANSKPKTGQGPPKPSPDENSYTAPNTIFKQSPPH). Residues 258 to 275 (DENSYTAPNTIFKQSPPH) show a composition bias toward polar residues. Residues 413 to 433 (VPPEPHWQFPQQSHFNSQPHH) are disordered. The span at 421–433 (FPQQSHFNSQPHH) shows a compositional bias: polar residues.

It belongs to the glycosyltransferase 14 family.

Its subcellular location is the golgi apparatus membrane. It participates in protein modification; protein glycosylation. Functionally, probable glycosyltransferase. This chain is Probable beta-1,3-galactosyl-O-glycosyl-glycoprotein beta-1,6-N-acetylglucosaminyltransferase 7, found in Mus musculus (Mouse).